The primary structure comprises 439 residues: Forkhead box protein J1-B (439 aa).

A DNA-binding region (fork-head) is located at residues 124 to 218 (KPPYSYATLI…MNGAMKKRRL (95 aa)).

It belongs to the FOXJ1 family.

It localises to the nucleus. Its function is as follows. Key transcription factor required for motile ciliogenesis. Activates genes essential for motile cilia formation and function. The protein is Forkhead box protein J1-B (foxj1-b) of Xenopus laevis (African clawed frog).